We begin with the raw amino-acid sequence, 144 residues long: MRNTARWAATLALTATAVCGPLTGAALATPAAAPASLYAPSALVLTVGHGTSAAAASPLRAVTLNCAPTASGTHPAPALACADLRGVGGDIDALKARDGVICNKLYDPVVVTVDGVWQGKRVSYERTFGNECVKNSYGTSLFAF.

Residues 1–34 form the signal peptide; it reads MRNTARWAATLALTATAVCGPLTGAALATPAAAP. 2 disulfides stabilise this stretch: cysteine 66–cysteine 81 and cysteine 102–cysteine 132.

The protein belongs to the protease inhibitor I16 (SSI) family. In terms of assembly, homodimer.

The protein resides in the secreted. In terms of biological role, inhibitory activity against trypsin. This Streptomyces longisporus protein is Trypsin inhibitor STI2 (sti2).